Reading from the N-terminus, the 900-residue chain is Alanine--tRNA ligase (900 aa).

Residues H568, H572, C672, and H676 each coordinate Zn(2+).

The protein belongs to the class-II aminoacyl-tRNA synthetase family. It depends on Zn(2+) as a cofactor.

It localises to the cytoplasm. It catalyses the reaction tRNA(Ala) + L-alanine + ATP = L-alanyl-tRNA(Ala) + AMP + diphosphate. Its function is as follows. Catalyzes the attachment of alanine to tRNA(Ala) in a two-step reaction: alanine is first activated by ATP to form Ala-AMP and then transferred to the acceptor end of tRNA(Ala). Also edits incorrectly charged Ser-tRNA(Ala) and Gly-tRNA(Ala) via its editing domain. The protein is Alanine--tRNA ligase of Mycoplasma genitalium (strain ATCC 33530 / DSM 19775 / NCTC 10195 / G37) (Mycoplasmoides genitalium).